Here is a 680-residue protein sequence, read N- to C-terminus: Penicillin-binding protein 2B (680 aa).

At 1–8 the chain is on the cytoplasmic side; it reads MRKFNSHS. A helical transmembrane segment spans residues 9–29; sequence IPIRLNLLFSIVILLFMTIIG. The Extracellular segment spans residues 30–680; that stretch reads RLLYMQVLNK…NLYQKYHPMN (651 aa). S386 serves as the catalytic Acyl-ester intermediate.

This sequence belongs to the transpeptidase family. Interacts with MreC in the elongasome.

Its subcellular location is the cell membrane. In terms of biological role, a transpeptidase that forms peptide cross-links between adjacent glycan strands in cell wall peptidoglycan (PG). Part of the elongasome machinery that synthesizes peripheral PG. This is Penicillin-binding protein 2B from Streptococcus pneumoniae serotype 2 (strain D39 / NCTC 7466).